Consider the following 219-residue polypeptide: HTH-type transcriptional activator FasR (219 aa).

Positions 1 to 30 are disordered; that stretch reads MSDLANTAERRGEKRPAGGNRRGNRLPRDE. One can recognise an HTH tetR-type domain in the interval 29-89; sequence DERRGQLLIA…AVLQRHVDNL (61 aa). Residues 52 to 71 constitute a DNA-binding region (H-T-H motif); that stretch reads GMDEIADRAGVSKPVLYQHF.

In terms of assembly, homodimer.

Its activity is regulated as follows. FasR:DNA binding is regulated by long-chain acyl-CoAs (C14- to C26-CoA), which act as effector molecules that modulate the affinity of FasR for its DNA binding sequences and therefore modulate the expression of the essential fas-acpS operon. Functionally, transcriptional activator that plays a central role in sensing mycobacterial long-chain fatty acids and regulating lipid biosynthesis. Activates the expression of the genes encoding the fatty acid synthase (fas) and the 4-phosphopantetheinyl transferase (acpS), whose products are involved in the fatty acid and mycolic acid biosynthesis. Specifically binds to three conserved operator sequences present in the fas-acpS promoter region. Essential for M.smegmatis viability. In Mycolicibacterium smegmatis (strain ATCC 700084 / mc(2)155) (Mycobacterium smegmatis), this protein is HTH-type transcriptional activator FasR.